The following is a 211-amino-acid chain: MNKRIVVTGTDTGVGKTVFSAGLAGLLGANYWKPVQAGLEQEIDSECIRRLGGLSSDRIVPELYRLRTPASPHHSAEIDGVRIDTETLGLPDSGERRLVIEGAGGLMVPLTARTLYIDIFERWQLPVVLCARTGLGTINHSLLSIEALRKRQIRILGIAFIGERNAETESAVCEIGRVRWLGRLPWLVPLTNDRLQAAFKDSFVSSDFLNL.

13–18 contributes to the ATP binding site; the sequence is GVGKTV. Position 17 (T17) interacts with Mg(2+). K33 is a catalytic residue. 2 residues coordinate Mg(2+): C47 and E101. Residues 101 to 104, 185 to 187, and N192 contribute to the ATP site; these read EGAG and PWL.

The protein belongs to the dethiobiotin synthetase family. Homodimer. Mg(2+) serves as cofactor.

The protein resides in the cytoplasm. The enzyme catalyses (7R,8S)-7,8-diammoniononanoate + CO2 + ATP = (4R,5S)-dethiobiotin + ADP + phosphate + 3 H(+). It participates in cofactor biosynthesis; biotin biosynthesis; biotin from 7,8-diaminononanoate: step 1/2. Its function is as follows. Catalyzes a mechanistically unusual reaction, the ATP-dependent insertion of CO2 between the N7 and N8 nitrogen atoms of 7,8-diaminopelargonic acid (DAPA, also called 7,8-diammoniononanoate) to form a ureido ring. In Bradyrhizobium diazoefficiens (strain JCM 10833 / BCRC 13528 / IAM 13628 / NBRC 14792 / USDA 110), this protein is ATP-dependent dethiobiotin synthetase BioD.